The sequence spans 150 residues: MNDDSSSSSSGDSSDGSSGTTIVQTNSYPWSAYGRWVVVIICIAALIFFFFIIGIINRRRTKKGQATIPFTNFYPLTAPPPYTAEPEARYNSTIHNPMPPMSQAYRPPPTEPPTVPAYETSSEFPPPAYPEAAATSDAAFRKYDGYAKLG.

Low complexity predominate over residues 1 to 19; sequence MNDDSSSSSSGDSSDGSSG. Disordered regions lie at residues 1–21 and 85–131; these read MNDD…SGTT and EPEA…AYPE. Residues 106–115 are compositionally biased toward pro residues; the sequence is RPPPTEPPTV.

This is an uncharacterized protein from Schizosaccharomyces pombe (strain 972 / ATCC 24843) (Fission yeast).